The primary structure comprises 97 residues: Co-chaperonin GroES (97 aa).

The protein belongs to the GroES chaperonin family. In terms of assembly, heptamer of 7 subunits arranged in a ring. Interacts with the chaperonin GroEL.

The protein resides in the cytoplasm. Together with the chaperonin GroEL, plays an essential role in assisting protein folding. The GroEL-GroES system forms a nano-cage that allows encapsulation of the non-native substrate proteins and provides a physical environment optimized to promote and accelerate protein folding. GroES binds to the apical surface of the GroEL ring, thereby capping the opening of the GroEL channel. This chain is Co-chaperonin GroES, found in Blochmanniella pennsylvanica (strain BPEN).